The primary structure comprises 692 residues: Elongation factor G (692 aa).

Residues 8-282 (EKTRNIGIMA…AVLDYLPAPT (275 aa)) enclose the tr-type G domain. Residues 17 to 24 (AHIDAGKT), 81 to 85 (DTPGH), and 135 to 138 (NKMD) each bind GTP.

The protein belongs to the TRAFAC class translation factor GTPase superfamily. Classic translation factor GTPase family. EF-G/EF-2 subfamily.

The protein resides in the cytoplasm. Catalyzes the GTP-dependent ribosomal translocation step during translation elongation. During this step, the ribosome changes from the pre-translocational (PRE) to the post-translocational (POST) state as the newly formed A-site-bound peptidyl-tRNA and P-site-bound deacylated tRNA move to the P and E sites, respectively. Catalyzes the coordinated movement of the two tRNA molecules, the mRNA and conformational changes in the ribosome. This chain is Elongation factor G, found in Bacillus licheniformis (strain ATCC 14580 / DSM 13 / JCM 2505 / CCUG 7422 / NBRC 12200 / NCIMB 9375 / NCTC 10341 / NRRL NRS-1264 / Gibson 46).